Consider the following 108-residue polypeptide: Peptidyl-prolyl cis-trans isomerase FKBP1A (108 aa).

A PPIase FKBP-type domain is found at 20-108 (GQTVVVHYVG…TFDVELLRLE (89 aa)).

Belongs to the FKBP-type PPIase family. FKBP1 subfamily.

Its subcellular location is the cytoplasm. The catalysed reaction is [protein]-peptidylproline (omega=180) = [protein]-peptidylproline (omega=0). Its activity is regulated as follows. Inhibited by both FK506 and rapamycin. Its function is as follows. Keeps in an inactive conformation TGFBR1, the TGF-beta type I serine/threonine kinase receptor, preventing TGF-beta receptor activation in absence of ligand. May modulate the RYR1 calcium channel activity. PPIases accelerate the folding of proteins. It catalyzes the cis-trans isomerization of proline imidic peptide bonds in oligopeptides. The chain is Peptidyl-prolyl cis-trans isomerase FKBP1A (fkbp1a) from Xenopus laevis (African clawed frog).